We begin with the raw amino-acid sequence, 378 residues long: Probable 3-hydroxyisobutyryl-CoA hydrolase 2 (378 aa).

Substrate-binding residues include G115, E138, and D146. Residues 376-378 carry the Microbody targeting signal motif; the sequence is AKL.

The protein belongs to the enoyl-CoA hydratase/isomerase family.

The protein localises to the peroxisome. It catalyses the reaction 3-hydroxy-2-methylpropanoyl-CoA + H2O = 3-hydroxy-2-methylpropanoate + CoA + H(+). It participates in amino-acid degradation; L-valine degradation. Functionally, involved in valine catabolism. The chain is Probable 3-hydroxyisobutyryl-CoA hydrolase 2 from Arabidopsis thaliana (Mouse-ear cress).